The sequence spans 718 residues: Peroxisomal bifunctional enzyme (718 aa).

The segment at 1–280 (MAEYLRLPHS…FAEKSANKWS (280 aa)) is enoyl-CoA hydratase / isomerase. Lys38 is subject to N6-succinyllysine. Residue Gly99 participates in substrate binding. Residues Lys163 and Lys172 each carry the N6-acetyllysine; alternate modification. An N6-succinyllysine; alternate mark is found at Lys163 and Lys172. Lys181 bears the N6-succinyllysine mark. 2 positions are modified to N6-acetyllysine; alternate: Lys189 and Lys217. An N6-succinyllysine; alternate mark is found at Lys189 and Lys217. At Lys240 the chain carries N6-succinyllysine. N6-acetyllysine is present on Lys248. At Lys252 the chain carries N6-succinyllysine. Lys274 carries the N6-acetyllysine; alternate modification. The residue at position 274 (Lys274) is an N6-succinyllysine; alternate. N6-succinyllysine occurs at positions 278, 288, and 329. Residues 281 to 567 (TPSGASWKTA…DMLCEAGRFG (287 aa)) form a 3-hydroxyacyl-CoA dehydrogenase region. N6-acetyllysine occurs at positions 344, 348, 355, and 459. Lys527 carries the post-translational modification N6-succinyllysine. Thr543 carries the phosphothreonine modification. Position 572 is an N6-succinyllysine (Lys572). An N6-acetyllysine; alternate mark is found at Lys579, Lys586, and Lys705. Residues Lys579, Lys586, and Lys705 each carry the N6-succinyllysine; alternate modification. Positions 716 to 718 (SKL) match the Microbody targeting signal motif. Lys717 bears the N6-succinyllysine mark.

The protein in the N-terminal section; belongs to the enoyl-CoA hydratase/isomerase family. This sequence in the C-terminal section; belongs to the 3-hydroxyacyl-CoA dehydrogenase family. Monomer. Post-translationally, acetylated, leading to enhanced enzyme activity. Acetylation is enhanced by up to 80% after treatment either with trichostin A (TCA) or with nicotinamide (NAM) with highest increase on Lys-344. Acetylation and enzyme activity increased by about 1.5% on addition of fatty acids.

The protein localises to the peroxisome. The enzyme catalyses a (3S)-3-hydroxyacyl-CoA = a (2E)-enoyl-CoA + H2O. The catalysed reaction is a 4-saturated-(3S)-3-hydroxyacyl-CoA = a (3E)-enoyl-CoA + H2O. It carries out the reaction a (3Z)-enoyl-CoA = a 4-saturated (2E)-enoyl-CoA. It catalyses the reaction a (3E)-enoyl-CoA = a 4-saturated (2E)-enoyl-CoA. The enzyme catalyses a (3S)-3-hydroxyacyl-CoA + NAD(+) = a 3-oxoacyl-CoA + NADH + H(+). The catalysed reaction is (2S,3S)-3-hydroxy-2-methylbutanoyl-CoA = (2E)-2-methylbut-2-enoyl-CoA + H2O. It carries out the reaction (2E)-dodecenedioyl-CoA + H2O = (3S)-hydroxydodecanedioyl-CoA. It catalyses the reaction (3S)-hydroxydodecanedioyl-CoA + NAD(+) = 3-oxododecanedioyl-CoA + NADH + H(+). The enzyme catalyses (2E)-octenedioyl-CoA + H2O = (3S)-hydroxyoctanedioyl-CoA. The catalysed reaction is (3S)-hydroxyoctanedioyl-CoA + NAD(+) = 3-oxooctanedioyl-CoA + NADH + H(+). It carries out the reaction (2E)-decenedioyl-CoA + H2O = (3S)-hydroxydecanedioyl-CoA. It catalyses the reaction (3S)-hydroxydecanedioyl-CoA + NAD(+) = 3-oxodecanedioyl-CoA + NADH + H(+). The enzyme catalyses (2E)-tetradecenedioyl-CoA + H2O = (3S)-hydroxytetradecanedioyl-CoA. The catalysed reaction is (3S)-hydroxytetradecanedioyl-CoA + NAD(+) = 3-oxotetradecanedioyl-CoA + NADH + H(+). It carries out the reaction (3E,5Z)-tetradecadienoyl-CoA = (2E,5Z)-tetradecadienoyl-CoA. It catalyses the reaction (3E,5Z)-octadienoyl-CoA = (2E,5Z)-octadienoyl-CoA. The enzyme catalyses (3S)-hydroxydecanoyl-CoA + NAD(+) = 3-oxodecanoyl-CoA + NADH + H(+). The catalysed reaction is (3E)-decenoyl-CoA = (2E)-decenoyl-CoA. It carries out the reaction (3Z)-hexenoyl-CoA = (2E)-hexenoyl-CoA. It catalyses the reaction (3E)-hexenoyl-CoA = (2E)-hexenoyl-CoA. The enzyme catalyses (3S)-hydroxydecanoyl-CoA = (2E)-decenoyl-CoA + H2O. The catalysed reaction is (3S)-hydroxyhexanoyl-CoA = (2E)-hexenoyl-CoA + H2O. It carries out the reaction (3S)-hydroxyhexadecanoyl-CoA + NAD(+) = 3-oxohexadecanoyl-CoA + NADH + H(+). It catalyses the reaction (3S)-hydroxyhexadecanoyl-CoA = (2E)-hexadecenoyl-CoA + H2O. The enzyme catalyses (2E)-hexadecenedioyl-CoA + H2O = (3S)-hydroxyhexadecanedioyl-CoA. The catalysed reaction is (3S)-hydroxyhexadecanedioyl-CoA + NAD(+) = 3-oxohexadecanedioyl-CoA + NADH + H(+). It functions in the pathway lipid metabolism; fatty acid beta-oxidation. Enzyme activity enhanced by acetylation. Peroxisomal trifunctional enzyme possessing 2-enoyl-CoA hydratase, 3-hydroxyacyl-CoA dehydrogenase, and delta 3, delta 2-enoyl-CoA isomerase activities. Catalyzes two of the four reactions of the long chain fatty acids peroxisomal beta-oxidation pathway. Can also use branched-chain fatty acids such as 2-methyl-2E-butenoyl-CoA as a substrate, which is hydrated into (2S,3S)-3-hydroxy-2-methylbutanoyl-CoA. Optimal isomerase for 2,5 double bonds into 3,5 form isomerization in a range of enoyl-CoA species. Also able to isomerize both 3-cis and 3-trans double bonds into the 2-trans form in a range of enoyl-CoA species. With HSD17B4, catalyzes the hydration of trans-2-enoyl-CoA and the dehydrogenation of 3-hydroxyacyl-CoA, but with opposite chiral specificity. Regulates the amount of medium-chain dicarboxylic fatty acids which are essential regulators of all fatty acid oxidation pathways. Also involved in the degradation of long-chain dicarboxylic acids through peroxisomal beta-oxidation. This Mus musculus (Mouse) protein is Peroxisomal bifunctional enzyme.